Here is a 448-residue protein sequence, read N- to C-terminus: Endoglucanase (448 aa).

Positions 1-34 (MFSKIKKINFFKKTFSFLIAVVMMLFTVLGTNTY) are cleaved as a signal peptide. Substrate is bound by residues His-70, 74 to 75 (WY), Tyr-101, and His-137. Glu-175 (proton donor) is an active-site residue. Residue Tyr-237 participates in substrate binding. Residue Glu-263 is the Nucleophile of the active site. Substrate is bound by residues 269–270 (AS), Trp-297, and 302–304 (KSE).

Belongs to the glycosyl hydrolase 5 (cellulase A) family.

It catalyses the reaction Endohydrolysis of (1-&gt;4)-beta-D-glucosidic linkages in cellulose, lichenin and cereal beta-D-glucans.. The chain is Endoglucanase (eglA) from Clostridium saccharobutylicum.